Reading from the N-terminus, the 242-residue chain is Biosynthetic peptidoglycan transglycosylase (242 aa).

Residues 19–39 (LMVVLAIFWGGGIALFSVAPV) form a helical membrane-spanning segment.

It belongs to the glycosyltransferase 51 family.

The protein localises to the cell inner membrane. The catalysed reaction is [GlcNAc-(1-&gt;4)-Mur2Ac(oyl-L-Ala-gamma-D-Glu-L-Lys-D-Ala-D-Ala)](n)-di-trans,octa-cis-undecaprenyl diphosphate + beta-D-GlcNAc-(1-&gt;4)-Mur2Ac(oyl-L-Ala-gamma-D-Glu-L-Lys-D-Ala-D-Ala)-di-trans,octa-cis-undecaprenyl diphosphate = [GlcNAc-(1-&gt;4)-Mur2Ac(oyl-L-Ala-gamma-D-Glu-L-Lys-D-Ala-D-Ala)](n+1)-di-trans,octa-cis-undecaprenyl diphosphate + di-trans,octa-cis-undecaprenyl diphosphate + H(+). It participates in cell wall biogenesis; peptidoglycan biosynthesis. Peptidoglycan polymerase that catalyzes glycan chain elongation from lipid-linked precursors. The chain is Biosynthetic peptidoglycan transglycosylase from Escherichia coli O127:H6 (strain E2348/69 / EPEC).